Reading from the N-terminus, the 423-residue chain is AP-1 complex subunit mu-2 (423 aa).

Positions 168-421 constitute an MHD domain; sequence KNEVFIDVIE…ITQSGDYQLR (254 aa).

This sequence belongs to the adaptor complexes medium subunit family. In terms of assembly, adaptor protein complex 1 (AP-1) is a heterotetramer composed of two large adaptins (gamma-type subunit AP1G1 and beta-type subunit AP1B1), a medium adaptin (mu-type subunit AP1M1 or AP1M2) and a small adaptin (sigma-type subunit AP1S1 or AP1S2 or AP1S3). Interacts with P2X4. In terms of processing, phosphorylation of membrane-bound AP1M1/AP1M2 increases its affinity for sorting signals.

The protein localises to the golgi apparatus. Its subcellular location is the cytoplasmic vesicle. The protein resides in the clathrin-coated vesicle membrane. Functionally, subunit of clathrin-associated adaptor protein complex 1 that plays a role in protein sorting in the trans-Golgi network (TGN) and endosomes. The AP complexes mediate the recruitment of clathrin to membranes and the recognition of sorting signals within the cytosolic tails of transmembrane cargo molecules. The polypeptide is AP-1 complex subunit mu-2 (Ap1m2) (Mus musculus (Mouse)).